The primary structure comprises 96 residues: uncharacterized protein (96 aa).

Positions 1–21 are cleaved as a signal peptide; that stretch reads MLASVLILGAIAVGSAIPTIA.

This is an uncharacterized protein from Archaeoglobus fulgidus (strain ATCC 49558 / DSM 4304 / JCM 9628 / NBRC 100126 / VC-16).